Reading from the N-terminus, the 96-residue chain is Small ribosomal subunit protein bS6 (96 aa).

The protein belongs to the bacterial ribosomal protein bS6 family.

Functionally, binds together with bS18 to 16S ribosomal RNA. The chain is Small ribosomal subunit protein bS6 from Bacillus thuringiensis subsp. konkukian (strain 97-27).